The following is a 408-amino-acid chain: MVNLEIILGVVMFTAIVLALVAIILAARARLVSTGDVTIRINGEKEVTAPAGGKLLQTLANSGIFLSSACGGGGTCAQCKCKVTSGGGSMLSTEQSHFTRRDEKEGYRLSCQVSVKQDMDVEVPEEVFGVKAWECTVESNPNVATFIKELTLKLPEGENVDFRAGGYVQLEAPAHTVNYKDFDIEEEYRGDWDKFNLWKFVSKVDETVIRAYSMANYPEEKGIVKFNIRIASPPPGKDDLPPGQMSSYVFSLKPGDKIKVYGPFGEFFAKDTDAEMVFVGGGAGMAPMRSHIFDQLKRLNSKRKISFWYGARSVREAFYTEEYDKLQEENENFEWHLALSDPQPEDNWEGKTGFIHNVLYESYLKDHPAPEDCEFYMCGPPMMNASVIKMLEDLGVEKENILLDDFGG.

The helical transmembrane segment at Ile-6–Ala-26 threads the bilayer. Residues Gly-35–Val-127 form the 2Fe-2S ferredoxin-type domain. Positions 70, 76, 79, and 111 each coordinate [2Fe-2S] cluster. The FAD-binding FR-type domain occupies Val-130 to Lys-270.

This sequence belongs to the NqrF family. In terms of assembly, composed of six subunits; NqrA, NqrB, NqrC, NqrD, NqrE and NqrF. Requires [2Fe-2S] cluster as cofactor. The cofactor is FAD.

The protein resides in the cell inner membrane. It carries out the reaction a ubiquinone + n Na(+)(in) + NADH + H(+) = a ubiquinol + n Na(+)(out) + NAD(+). Its function is as follows. NQR complex catalyzes the reduction of ubiquinone-1 to ubiquinol by two successive reactions, coupled with the transport of Na(+) ions from the cytoplasm to the periplasm. The first step is catalyzed by NqrF, which accepts electrons from NADH and reduces ubiquinone-1 to ubisemiquinone by a one-electron transfer pathway. The protein is Na(+)-translocating NADH-quinone reductase subunit F of Marinomonas sp. (strain MWYL1).